The following is a 209-amino-acid chain: Small ribosomal subunit protein uS4 (209 aa).

In terms of domain architecture, S4 RNA-binding spans 98–166; it reads RRLDNVVYRL…IKQAIELNKG (69 aa).

This sequence belongs to the universal ribosomal protein uS4 family. In terms of assembly, part of the 30S ribosomal subunit. Contacts protein S5. The interaction surface between S4 and S5 is involved in control of translational fidelity.

In terms of biological role, one of the primary rRNA binding proteins, it binds directly to 16S rRNA where it nucleates assembly of the body of the 30S subunit. With S5 and S12 plays an important role in translational accuracy. The chain is Small ribosomal subunit protein uS4 from Fervidobacterium nodosum (strain ATCC 35602 / DSM 5306 / Rt17-B1).